The primary structure comprises 415 residues: Imidazolonepropionase (415 aa).

2 residues coordinate Fe(3+): histidine 75 and histidine 77. Residues histidine 75 and histidine 77 each coordinate Zn(2+). The 4-imidazolone-5-propanoate site is built by arginine 84, tyrosine 147, and histidine 180. Position 147 (tyrosine 147) interacts with N-formimidoyl-L-glutamate. Histidine 245 serves as a coordination point for Fe(3+). Histidine 245 is a binding site for Zn(2+). Glutamine 248 contributes to the 4-imidazolone-5-propanoate binding site. A Fe(3+)-binding site is contributed by aspartate 320. Aspartate 320 is a binding site for Zn(2+). The N-formimidoyl-L-glutamate site is built by asparagine 322 and glycine 324. Threonine 325 contributes to the 4-imidazolone-5-propanoate binding site.

This sequence belongs to the metallo-dependent hydrolases superfamily. HutI family. Requires Zn(2+) as cofactor. Fe(3+) serves as cofactor.

It is found in the cytoplasm. The enzyme catalyses 4-imidazolone-5-propanoate + H2O = N-formimidoyl-L-glutamate. It participates in amino-acid degradation; L-histidine degradation into L-glutamate; N-formimidoyl-L-glutamate from L-histidine: step 3/3. Catalyzes the hydrolytic cleavage of the carbon-nitrogen bond in imidazolone-5-propanoate to yield N-formimidoyl-L-glutamate. It is the third step in the universal histidine degradation pathway. The sequence is that of Imidazolonepropionase from Photorhabdus laumondii subsp. laumondii (strain DSM 15139 / CIP 105565 / TT01) (Photorhabdus luminescens subsp. laumondii).